Reading from the N-terminus, the 358-residue chain is MREYKIAAIPADGIGPEVIAAGLQVLEALEQRSGDFKIHTETFDWGSDYYKKHGVMMPADGLDKLKKFDAIFFGAVGAPDVPDHITLWGLRLPICQGFDQYANVRPTKILPGITPPLRNCGPGDLDWVIVRENSEGEYSGHGGRAHRGLPEEVGTEVAIFTRVGVTRIMRYAFKLAQARPRKLLTVVTKSNAQRHGMVMWDEIAAEVATEFPDVTWDKMLVDAMTVRMTLKPETLDTIVATNLHADILSDLAGALAGSLGVAPTANIDPERRFPSMFEPIHGSAFDITGKGIANPIATFWTAAQMLEHLGERDAAARLMSAVERVTEAGILTPDVGGTANTSQVTEAVCNAIAGSNII.

Mn(2+) contacts are provided by Asp-222, Asp-246, and Asp-250.

The protein belongs to the isocitrate and isopropylmalate dehydrogenases family. The cofactor is Mg(2+). Mn(2+) serves as cofactor. It depends on K(+) as a cofactor.

It is found in the cytoplasm. It catalyses the reaction tartrate + NAD(+) = 2-hydroxy-3-oxosuccinate + NADH + H(+). The catalysed reaction is (2R,3S)-tartrate + NAD(+) = 2-hydroxy-3-oxosuccinate + NADH + H(+). It carries out the reaction (2R,3R)-tartrate + NAD(+) = 2-hydroxy-3-oxosuccinate + NADH + H(+). The enzyme catalyses (2R,3R)-tartrate + H(+) = (R)-glycerate + CO2. It catalyses the reaction (R)-malate + NAD(+) = pyruvate + CO2 + NADH. It functions in the pathway carbohydrate acid metabolism; tartrate degradation; 2-hydroxy-3-oxosuccinate from L-tartrate: step 1/1. Its pathway is carbohydrate acid metabolism; tartrate degradation; 2-hydroxy-3-oxosuccinate from meso-tartrate: step 1/1. The protein operates within carbohydrate acid metabolism; tartrate degradation; D-glycerate from L-tartrate: step 1/1. In terms of biological role, has multiple catalytic activities. Apart from catalyzing the oxidation of (+)-tartrate to oxaloglycolate, also converts meso-tartrate to D-glycerate and catalyzes the oxidative decarboxylation of D-malate to pyruvate. The protein is Probable tartrate dehydrogenase/decarboxylase TtuC' (ttuC') of Agrobacterium vitis (Rhizobium vitis).